The primary structure comprises 365 residues: Aminomethyltransferase (365 aa).

This sequence belongs to the GcvT family. As to quaternary structure, the glycine cleavage system is composed of four proteins: P, T, L and H.

It carries out the reaction N(6)-[(R)-S(8)-aminomethyldihydrolipoyl]-L-lysyl-[protein] + (6S)-5,6,7,8-tetrahydrofolate = N(6)-[(R)-dihydrolipoyl]-L-lysyl-[protein] + (6R)-5,10-methylene-5,6,7,8-tetrahydrofolate + NH4(+). In terms of biological role, the glycine cleavage system catalyzes the degradation of glycine. The sequence is that of Aminomethyltransferase from Parafrankia sp. (strain EAN1pec).